The following is a 96-amino-acid chain: Large ribosomal subunit protein bL27 (96 aa).

A propeptide spanning residues 1-10 is cleaved from the precursor; sequence MLLKLNIQLF.

Belongs to the bacterial ribosomal protein bL27 family. In terms of processing, the N-terminus is cleaved by ribosomal processing cysteine protease Prp.

In Phytoplasma mali (strain AT), this protein is Large ribosomal subunit protein bL27.